The primary structure comprises 368 residues: Zinc finger protein 24 (368 aa).

K22 is covalently cross-linked (Glycyl lysine isopeptide (Lys-Gly) (interchain with G-Cter in SUMO2)). A Glycyl lysine isopeptide (Lys-Gly) (interchain with G-Cter in SUMO1); alternate cross-link involves residue K27. K27 is covalently cross-linked (Glycyl lysine isopeptide (Lys-Gly) (interchain with G-Cter in SUMO2); alternate). Residues 52–134 (RQRFRQFGYQ…TVLEDLESEL (83 aa)) form the SCAN box domain. Phosphoserine is present on residues S132 and S142. Glycyl lysine isopeptide (Lys-Gly) (interchain with G-Cter in SUMO2) cross-links involve residues K147, K177, and K236. A C2H2-type 1 zinc finger spans residues 251–273 (HICDECGKHFSQGSALILHQRIH). Residues 251 to 301 (HICDECGKHFSQGSALILHQRIHSGEKPYGCVECGKAFSRSSILVQHQRVH) are necessary and sufficient for nuclear localization. At S274 the chain carries Phosphoserine. Residues K277 and K286 each participate in a glycyl lysine isopeptide (Lys-Gly) (interchain with G-Cter in SUMO2) cross-link. 3 consecutive C2H2-type zinc fingers follow at residues 279–301 (YGCV…QRVH), 307–329 (YKCL…QRIH), and 335–357 (YECV…QRRH). S292 bears the Phosphoserine mark. A Phosphotyrosine modification is found at Y335. Residues K361 and K367 each participate in a glycyl lysine isopeptide (Lys-Gly) (interchain with G-Cter in SUMO2) cross-link.

Belongs to the krueppel C2H2-type zinc-finger protein family. Post-translationally, sumoylated. As to expression, expressed in many tissues except in heart.

It localises to the nucleus. In terms of biological role, transcription factor required for myelination of differentiated oligodendrocytes. Required for the conversion of oligodendrocytes from the premyelinating to the myelinating state. In the developing central nervous system (CNS), involved in the maintenance in the progenitor stage by promoting the cell cycle. Specifically binds to the 5'-TCAT-3' DNA sequence. Has transcription repressor activity in vitro. In Homo sapiens (Human), this protein is Zinc finger protein 24 (ZNF24).